The sequence spans 251 residues: DNA repair protein RecO (251 aa).

The protein belongs to the RecO family.

In terms of biological role, involved in DNA repair and RecF pathway recombination. This is DNA repair protein RecO from Acidiphilium cryptum (strain JF-5).